Here is a 326-residue protein sequence, read N- to C-terminus: Protoheme IX farnesyltransferase (326 aa).

8 consecutive transmembrane segments (helical) span residues 35–55, 60–80, 106–126, 129–149, 157–177, 185–205, 238–258, and 289–309; these read LIPL…GWPL, LICT…LNCL, TAFI…VSGV, LAAG…TALL, IVVG…AATG, WLFA…ALLL, VLLS…YGLM, and WSIL…SALA.

This sequence belongs to the UbiA prenyltransferase family. Protoheme IX farnesyltransferase subfamily.

The protein resides in the cell inner membrane. The catalysed reaction is heme b + (2E,6E)-farnesyl diphosphate + H2O = Fe(II)-heme o + diphosphate. The protein operates within porphyrin-containing compound metabolism; heme O biosynthesis; heme O from protoheme: step 1/1. Converts heme B (protoheme IX) to heme O by substitution of the vinyl group on carbon 2 of heme B porphyrin ring with a hydroxyethyl farnesyl side group. This Synechococcus sp. (strain CC9902) protein is Protoheme IX farnesyltransferase.